Consider the following 132-residue polypeptide: Small ribosomal subunit protein uS9 (132 aa).

The protein belongs to the universal ribosomal protein uS9 family.

The sequence is that of Small ribosomal subunit protein uS9 from Baumannia cicadellinicola subsp. Homalodisca coagulata.